A 428-amino-acid polypeptide reads, in one-letter code: D-amino acid dehydrogenase (428 aa).

3-17 (VVILGSGVVGVASAY) provides a ligand contact to FAD.

This sequence belongs to the DadA oxidoreductase family. FAD serves as cofactor.

It catalyses the reaction a D-alpha-amino acid + A + H2O = a 2-oxocarboxylate + AH2 + NH4(+). It functions in the pathway amino-acid degradation; D-alanine degradation; NH(3) and pyruvate from D-alanine: step 1/1. In terms of biological role, oxidative deamination of D-amino acids. The sequence is that of D-amino acid dehydrogenase from Burkholderia mallei (strain NCTC 10247).